Consider the following 637-residue polypeptide: Chaperone protein HtpG (637 aa).

An a; substrate-binding region spans residues 1 to 345 (MSQQETHGFQ…SNDLPLNVSR (345 aa)). A b region spans residues 346-562 (EILQDNHVTK…EGEMSTQMIK (217 aa)). Residues 563-637 (LMQAAGQPVP…MNQMLLANMK (75 aa)) form a c region.

This sequence belongs to the heat shock protein 90 family. In terms of assembly, homodimer.

It is found in the cytoplasm. Molecular chaperone. Has ATPase activity. This Shewanella baltica (strain OS185) protein is Chaperone protein HtpG.